Reading from the N-terminus, the 156-residue chain is 6,7-dimethyl-8-ribityllumazine synthase (156 aa).

5-amino-6-(D-ribitylamino)uracil contacts are provided by residues phenylalanine 22, 56 to 58 (AFE), and 80 to 82 (AVI). 85-86 (ST) contributes to the (2S)-2-hydroxy-3-oxobutyl phosphate binding site. Histidine 88 (proton donor) is an active-site residue. Position 113 (phenylalanine 113) interacts with 5-amino-6-(D-ribitylamino)uracil. Arginine 127 contacts (2S)-2-hydroxy-3-oxobutyl phosphate.

It belongs to the DMRL synthase family.

It carries out the reaction (2S)-2-hydroxy-3-oxobutyl phosphate + 5-amino-6-(D-ribitylamino)uracil = 6,7-dimethyl-8-(1-D-ribityl)lumazine + phosphate + 2 H2O + H(+). It functions in the pathway cofactor biosynthesis; riboflavin biosynthesis; riboflavin from 2-hydroxy-3-oxobutyl phosphate and 5-amino-6-(D-ribitylamino)uracil: step 1/2. Functionally, catalyzes the formation of 6,7-dimethyl-8-ribityllumazine by condensation of 5-amino-6-(D-ribitylamino)uracil with 3,4-dihydroxy-2-butanone 4-phosphate. This is the penultimate step in the biosynthesis of riboflavin. In Caldicellulosiruptor saccharolyticus (strain ATCC 43494 / DSM 8903 / Tp8T 6331), this protein is 6,7-dimethyl-8-ribityllumazine synthase.